A 246-amino-acid chain; its full sequence is Flagellar brake protein YcgR (246 aa).

The region spanning 122–234 is the PilZ domain; it reads QRREFFRIQT…PMETIIQRYV (113 aa).

Belongs to the YcgR family. In terms of assembly, monomer. Interacts with the flagellar basal bodies.

Its subcellular location is the bacterial flagellum basal body. Acts as a flagellar brake, regulating swimming and swarming in a bis-(3'-5') cyclic diguanylic acid (c-di-GMP)-dependent manner. Binds 1 c-di-GMP dimer per subunit. Increasing levels of c-di-GMP lead to decreased motility. This is Flagellar brake protein YcgR from Chromobacterium violaceum (strain ATCC 12472 / DSM 30191 / JCM 1249 / CCUG 213 / NBRC 12614 / NCIMB 9131 / NCTC 9757 / MK).